The primary structure comprises 393 residues: Iripin-3 (393 aa).

A signal peptide spans 1–16 (MKVITAFLSVFVLCSA). 2 N-linked (GlcNAc...) asparagine glycosylation sites follow: asparagine 104 and asparagine 265.

Belongs to the serpin family. As to quaternary structure, interacts with human KLKB1. Interacts with human ST14. Interacts with human F2 (thrombin). As to expression, saliva (at protein level). Expressed in salivary gland. Expressed in ovary during blood feeding.

The protein resides in the secreted. In terms of biological role, serine protease inhibitor that modulates blood feeding of ticks on vertebrate species. Moderately inhibits host plasma kallikrein (KLKB1), matriptase (ST14), trypsin, plasmin (PLG), thrombin (F2) and coagulation factor VIIa (F7). Slightly inhibits host alpha-chymotrypsin, tPA/tissue-type plasminogen activator (PLAT), uPA/urokinase-type plasminogen activator (PLAU) and coagulation factor XIIa (F12). Slightly inhibits the extrinsic pathway while not affecting the intrinsic and common pathways of host blood coagulation. Decreases synthesis and secretion of IL6 by mouse bone marrow-derived macrophages. Decreases viability of mouse B- and T-cells. Decreases proliferation of mouse CD4+ T-cells in response to stimulation. Inhibits Th1 immune responses in mouse cells. Promotes differentiation of mouse regulatory T-cells. The sequence is that of Iripin-3 from Ixodes ricinus (Common tick).